The following is a 145-amino-acid chain: 3-hydroxyacyl-[acyl-carrier-protein] dehydratase FabZ (145 aa).

Histidine 49 is a catalytic residue.

Belongs to the thioester dehydratase family. FabZ subfamily.

The protein localises to the cytoplasm. The enzyme catalyses a (3R)-hydroxyacyl-[ACP] = a (2E)-enoyl-[ACP] + H2O. Involved in unsaturated fatty acids biosynthesis. Catalyzes the dehydration of short chain beta-hydroxyacyl-ACPs and long chain saturated and unsaturated beta-hydroxyacyl-ACPs. In Rickettsia akari (strain Hartford), this protein is 3-hydroxyacyl-[acyl-carrier-protein] dehydratase FabZ.